The following is a 974-amino-acid chain: Zinc finger protein 280D (974 aa).

Residues Lys-44, Lys-46, Lys-86, Lys-99, Lys-138, Lys-201, Lys-222, Lys-245, Lys-287, and Lys-304 each participate in a glycyl lysine isopeptide (Lys-Gly) (interchain with G-Cter in SUMO2) cross-link. The interval 188-216 is disordered; sequence KRPSGSDISSVNPKKPKPSENTSGIDASS. 2 consecutive C2H2-type zinc fingers follow at residues 333-355 and 370-393; these read FKCFSCLKVLKNNIRFMNHMKHH and TTCQHCYRQFPTPFQLQCHIESTH. The C2H2-type 3; degenerate zinc finger occupies 400–424; that stretch reads TICKICELSFETEQILLQHMKDNHK. 2 C2H2-type zinc fingers span residues 430 to 453 and 459 to 481; these read YICQVCNYRSSLFSEVESHFRTSH and LLCPFCLKVIKIATPYMHHYMKH. Disordered stretches follow at residues 507 to 624, 751 to 797, and 815 to 974; these read TQHH…KVNT, IKTE…EGTG, and VTVS…EERS. Positions 539-557 are enriched in low complexity; the sequence is SGSSVTPSISPSTSTLQLS. Ser-557 is subject to Phosphoserine. The segment covering 571–587 has biased composition (polar residues); the sequence is KLTTSTPNTTISDPSKA. Positions 591–611 are enriched in low complexity; sequence KSNGSKSKNKSKVSNMQKKQS. The span at 612–624 shows a compositional bias: polar residues; sequence TLSSSNKKSKVNT. Residue Lys-752 forms a Glycyl lysine isopeptide (Lys-Gly) (interchain with G-Cter in SUMO2) linkage. Basic and acidic residues predominate over residues 763 to 775; that stretch reads VSKETARHSRAEG. Over residues 817-829 the composition is skewed to polar residues; sequence VSDTENVSSSKNI. A compositionally biased stretch (basic and acidic residues) spans 830-860; the sequence is LSHDPDVGTDTMEKEEKTHHACQEMELKVDQ. The span at 861–884 shows a compositional bias: polar residues; sequence SSESTNPTEAELSSETRQGLQLTS. 2 positions are modified to phosphoserine: Ser-904 and Ser-907. The span at 938–950 shows a compositional bias: polar residues; sequence SANTSDTVSDQTG.

Its subcellular location is the nucleus. Its function is as follows. May function as a transcription factor. The protein is Zinc finger protein 280D (Znf280d) of Mus musculus (Mouse).